Reading from the N-terminus, the 294-residue chain is tRNA pseudouridine synthase B (294 aa).

The active-site Nucleophile is aspartate 40.

The protein belongs to the pseudouridine synthase TruB family. Type 1 subfamily.

The enzyme catalyses uridine(55) in tRNA = pseudouridine(55) in tRNA. In terms of biological role, responsible for synthesis of pseudouridine from uracil-55 in the psi GC loop of transfer RNAs. The chain is tRNA pseudouridine synthase B from Synechococcus elongatus (strain ATCC 33912 / PCC 7942 / FACHB-805) (Anacystis nidulans R2).